A 299-amino-acid chain; its full sequence is Lymphocyte antigen 6 complex locus protein G6f (299 aa).

Residues 1–19 (MAVLFLLLLFLCGLPQAET) form the signal peptide. An Ig-like V-type domain is found at 20-124 (DSIQAIYVVL…YRYQNWRVYD (105 aa)). The Extracellular segment spans residues 20 to 237 (DSIQAIYVVL…APSADWDVAW (218 aa)). Cys37 and Cys108 are joined by a disulfide. An N-linked (GlcNAc...) asparagine glycan is attached at Asn90. The chain crosses the membrane as a helical span at residues 238 to 258 (ILTLLLTVGQGFTIVVLGVML). Topologically, residues 259 to 299 (WRQRAQGAQHRNASFPQFKPEIQVYENIHLAHLSPPAPKTR) are cytoplasmic. At Tyr283 the chain carries Phosphotyrosine.

Homodimer; disulfide-linked. Interacts with GRB2 and GRB7 in a phosphorylation-dependent manner. In terms of processing, N-glycosylated.

Its subcellular location is the cell membrane. Its function is as follows. May play a role in the downstream signal transduction pathways involving GRB2 and GRB7. This chain is Lymphocyte antigen 6 complex locus protein G6f (LY6G6F), found in Bos taurus (Bovine).